The sequence spans 231 residues: Protein RhiA (231 aa).

May be involved in plant-microbe interaction. The protein is Protein RhiA (rhiA) of Rhizobium leguminosarum bv. viciae.